The following is a 445-amino-acid chain: Chromosome partition protein MukF (445 aa).

The leucine-zipper stretch occupies residues 213–241 (LSETSNTLKELQDTLQAAGDELQTQILDI).

Belongs to the MukF family. As to quaternary structure, interacts, and probably forms a ternary complex, with MukE and MukB via its C-terminal region. The complex formation is stimulated by calcium or magnesium. It is required for an interaction between MukE and MukB.

It localises to the cytoplasm. Its subcellular location is the nucleoid. In terms of biological role, involved in chromosome condensation, segregation and cell cycle progression. May participate in facilitating chromosome segregation by condensation DNA from both sides of a centrally located replisome during cell division. Not required for mini-F plasmid partitioning. Probably acts via its interaction with MukB and MukE. Overexpression results in anucleate cells. It has a calcium binding activity. In Vibrio vulnificus (strain YJ016), this protein is Chromosome partition protein MukF.